We begin with the raw amino-acid sequence, 1168 residues long: DNA-directed RNA polymerase subunit beta (1168 aa).

Belongs to the RNA polymerase beta chain family. In terms of assembly, the RNAP catalytic core consists of 2 alpha, 1 beta, 1 beta' and 1 omega subunit. When a sigma factor is associated with the core the holoenzyme is formed, which can initiate transcription.

The catalysed reaction is RNA(n) + a ribonucleoside 5'-triphosphate = RNA(n+1) + diphosphate. Functionally, DNA-dependent RNA polymerase catalyzes the transcription of DNA into RNA using the four ribonucleoside triphosphates as substrates. The protein is DNA-directed RNA polymerase subunit beta of Rhodococcus opacus (strain B4).